We begin with the raw amino-acid sequence, 364 residues long: Anionic peroxidase (364 aa).

A signal peptide spans 1–20 (MASFMKQLSLVLSFIALALA). Residues 21–66 (GCAVYQNTQTAMKDQLKVTPTWLDNTLKSTNLLSLGLGKPSGGKLG) constitute a propeptide that is removed on maturation. Residue His-99 is the Proton acceptor of the active site. 4 residues coordinate Ca(2+): Asp-100, Val-103, Gly-105, and Asp-107. Cysteines 101 and 106 form a disulfide. Asn-113, Asn-188, Asn-202, and Asn-216 each carry an N-linked (GlcNAc...) asparagine glycan. 2 cysteine pairs are disulfide-bonded: Cys-155/Cys-343 and Cys-234/Cys-255. His-227 serves as a coordination point for heme b. Thr-228 contacts Ca(2+). Residues Asn-254 and Asn-260 are each glycosylated (N-linked (GlcNAc...) asparagine). Residues Asp-268, Thr-270, and Asp-275 each coordinate Ca(2+). Residue Asn-299 is glycosylated (N-linked (GlcNAc...) asparagine).

This sequence belongs to the peroxidase family. Classical plant (class III) peroxidase subfamily. Ca(2+) serves as cofactor. Heme b is required as a cofactor. In terms of tissue distribution, highly expressed in suspension cultured cells and calli. Weak expression also found in the stems of intact plants. No expression in leaf, tuberous root and non-tuberous root.

The protein resides in the secreted. The catalysed reaction is 2 a phenolic donor + H2O2 = 2 a phenolic radical donor + 2 H2O. In terms of biological role, removal of H(2)O(2), oxidation of toxic reductants, biosynthesis and degradation of lignin, suberization, auxin catabolism, response to environmental stresses such as wounding, pathogen attack and oxidative stress. These functions might be dependent on each isozyme/isoform in each plant tissue. Functionally, may contribute to protection against cold-induced oxidative stress. In Ipomoea batatas (Sweet potato), this protein is Anionic peroxidase.